A 320-amino-acid polypeptide reads, in one-letter code: Phospho-N-acetylmuramoyl-pentapeptide-transferase (320 aa).

Helical transmembrane passes span 6 to 26 (FLTP…LFIG), 54 to 74 (MGGL…AIWL), 81 to 101 (LWIA…DDFI), 117 to 137 (LAGQ…EGFS), 145 to 165 (IGTI…LVGF), 175 to 195 (IDGL…IIAF), 200 to 220 (IDVA…LIFN), 226 to 246 (IFMG…MSIL), 251 to 271 (FSLL…MLQV), and 300 to 320 (RIDI…LLIF).

This sequence belongs to the glycosyltransferase 4 family. MraY subfamily. Mg(2+) is required as a cofactor.

The protein resides in the cell membrane. The catalysed reaction is UDP-N-acetyl-alpha-D-muramoyl-L-alanyl-gamma-D-glutamyl-L-lysyl-D-alanyl-D-alanine + di-trans,octa-cis-undecaprenyl phosphate = Mur2Ac(oyl-L-Ala-gamma-D-Glu-L-Lys-D-Ala-D-Ala)-di-trans,octa-cis-undecaprenyl diphosphate + UMP. Its pathway is cell wall biogenesis; peptidoglycan biosynthesis. Catalyzes the initial step of the lipid cycle reactions in the biosynthesis of the cell wall peptidoglycan: transfers peptidoglycan precursor phospho-MurNAc-pentapeptide from UDP-MurNAc-pentapeptide onto the lipid carrier undecaprenyl phosphate, yielding undecaprenyl-pyrophosphoryl-MurNAc-pentapeptide, known as lipid I. This is Phospho-N-acetylmuramoyl-pentapeptide-transferase from Latilactobacillus sakei subsp. sakei (strain 23K) (Lactobacillus sakei subsp. sakei).